The following is a 90-amino-acid chain: Large ribosomal subunit protein bL27 (90 aa).

The interval 1-22 (MAHKKSGGSSSNGRDSAGRRLG) is disordered.

The protein belongs to the bacterial ribosomal protein bL27 family.

This chain is Large ribosomal subunit protein bL27, found in Caulobacter sp. (strain K31).